A 354-amino-acid chain; its full sequence is Protein RecA (354 aa).

75–82 (GPESSGKT) provides a ligand contact to ATP.

It belongs to the RecA family.

Its subcellular location is the cytoplasm. Can catalyze the hydrolysis of ATP in the presence of single-stranded DNA, the ATP-dependent uptake of single-stranded DNA by duplex DNA, and the ATP-dependent hybridization of homologous single-stranded DNAs. It interacts with LexA causing its activation and leading to its autocatalytic cleavage. This is Protein RecA from Cupriavidus taiwanensis (strain DSM 17343 / BCRC 17206 / CCUG 44338 / CIP 107171 / LMG 19424 / R1) (Ralstonia taiwanensis (strain LMG 19424)).